Here is a 177-residue protein sequence, read N- to C-terminus: Large ribosomal subunit protein uL6 (177 aa).

Belongs to the universal ribosomal protein uL6 family. In terms of assembly, part of the 50S ribosomal subunit.

Functionally, this protein binds to the 23S rRNA, and is important in its secondary structure. It is located near the subunit interface in the base of the L7/L12 stalk, and near the tRNA binding site of the peptidyltransferase center. The polypeptide is Large ribosomal subunit protein uL6 (Rickettsia africae (strain ESF-5)).